We begin with the raw amino-acid sequence, 230 residues long: Endonuclease NucS (230 aa).

Belongs to the NucS endonuclease family.

Its subcellular location is the cytoplasm. In terms of biological role, cleaves both 3' and 5' ssDNA extremities of branched DNA structures. In Corynebacterium efficiens (strain DSM 44549 / YS-314 / AJ 12310 / JCM 11189 / NBRC 100395), this protein is Endonuclease NucS.